The primary structure comprises 180 residues: Ribosome-recycling factor (180 aa).

The protein belongs to the RRF family.

The protein localises to the cytoplasm. Functionally, responsible for the release of ribosomes from messenger RNA at the termination of protein biosynthesis. May increase the efficiency of translation by recycling ribosomes from one round of translation to another. This Chlamydia caviae (strain ATCC VR-813 / DSM 19441 / 03DC25 / GPIC) (Chlamydophila caviae) protein is Ribosome-recycling factor.